The following is a 324-amino-acid chain: ATP-dependent 6-phosphofructokinase (324 aa).

Glycine 11 serves as a coordination point for ATP. An ADP-binding site is contributed by 21-25 (RAVVR). ATP-binding positions include 72 to 73 (RE) and 102 to 105 (GNGS). A Mg(2+)-binding site is contributed by asparagine 103. Residue 126–128 (TID) coordinates substrate. The active-site Proton acceptor is the aspartate 128. ADP is bound at residue lysine 155. Residues arginine 163 and 170–172 (MGR) contribute to the substrate site. ADP is bound by residues 186–188 (GAE) and 214–216 (KNF). Residues glutamate 223, arginine 248, and 254–257 (YIQR) contribute to the substrate site.

This sequence belongs to the phosphofructokinase type A (PFKA) family. ATP-dependent PFK group I subfamily. Prokaryotic clade 'B1' sub-subfamily. In terms of assembly, homotetramer. Mg(2+) serves as cofactor.

It is found in the cytoplasm. It carries out the reaction beta-D-fructose 6-phosphate + ATP = beta-D-fructose 1,6-bisphosphate + ADP + H(+). It functions in the pathway carbohydrate degradation; glycolysis; D-glyceraldehyde 3-phosphate and glycerone phosphate from D-glucose: step 3/4. Its activity is regulated as follows. Allosterically activated by ADP and other diphosphonucleosides, and allosterically inhibited by phosphoenolpyruvate. Catalyzes the phosphorylation of D-fructose 6-phosphate to fructose 1,6-bisphosphate by ATP, the first committing step of glycolysis. This chain is ATP-dependent 6-phosphofructokinase, found in Sulfurihydrogenibium sp. (strain YO3AOP1).